The chain runs to 267 residues: MTLDVWQHIRQEAKELAENEPMLASFFHSTILKHQNLGGALSYLLANKLANPIMPAISLREIIEEAYQSNPSIIDCAACDIQAVRHRDPAVELWSTPLLYLKGFHAIQSYRITHYLWNQNRKSLALYLQNQISVAFDVDIHPAAKIGHGIMFDHATGIVVGETSVIENDVSILQGVTLGGTGKESGDRHPKVREGVMIGAGAKILGNIEVGKYAKIGANSVVLNPVPEYATAAGVPARIVSQDKAAKPAFDMNQYFIGIDDGMNLNI.

It belongs to the transferase hexapeptide repeat family.

It is found in the cytoplasm. It carries out the reaction L-serine + acetyl-CoA = O-acetyl-L-serine + CoA. Its pathway is amino-acid biosynthesis; L-cysteine biosynthesis; L-cysteine from L-serine: step 1/2. This is Serine acetyltransferase (cysE) from Haemophilus influenzae (strain ATCC 51907 / DSM 11121 / KW20 / Rd).